The following is a 92-amino-acid chain: Islet amyloid polypeptide (92 aa).

The signal sequence occupies residues 1-22 (MHISKLPAALLIFSVALNHLKA). A propeptide spanning residues 23–34 (TPVRSGTNHQMD) is cleaved from the precursor. Cys-38 and Cys-43 are disulfide-bonded. Tyr-73 is subject to Tyrosine amide. Residues 77–92 (SAAEIPDGDSLDLFLL) constitute a propeptide that is removed on maturation.

It belongs to the calcitonin family. In terms of assembly, can form homodimers. Interacts with IDE and INS. Interaction with INS inhibits homodimerization and fibril formation.

Its subcellular location is the secreted. Amylin/IAPP is a glucoregulatory peptide hormone that plays an important role in the regulation of energy homeostasis. Selectively inhibits insulin-stimulated glucose utilization and glycogen deposition in muscle, while not affecting adipocyte glucose metabolism. IAPP function is mediated by the CALCR-RAMPs (AMYRs) receptor complexes. Amylin can also bind CALCR receptor in the absence of RAMPs, although it is more selective for AMYRs. The protein is Islet amyloid polypeptide (IAPP) of Mesocricetus auratus (Golden hamster).